Consider the following 187-residue polypeptide: GTP cyclohydrolase 1 (187 aa).

3 residues coordinate Zn(2+): Cys-76, His-79, and Cys-148.

It belongs to the GTP cyclohydrolase I family. As to quaternary structure, toroid-shaped homodecamer, composed of two pentamers of five dimers.

It catalyses the reaction GTP + H2O = 7,8-dihydroneopterin 3'-triphosphate + formate + H(+). It participates in cofactor biosynthesis; 7,8-dihydroneopterin triphosphate biosynthesis; 7,8-dihydroneopterin triphosphate from GTP: step 1/1. The chain is GTP cyclohydrolase 1 from Acetivibrio thermocellus (strain ATCC 27405 / DSM 1237 / JCM 9322 / NBRC 103400 / NCIMB 10682 / NRRL B-4536 / VPI 7372) (Clostridium thermocellum).